Consider the following 552-residue polypeptide: Urocanate hydratase (552 aa).

NAD(+) is bound by residues 49–50 (GG), Q127, 173–175 (GMG), D193, 239–240 (NA), 260–264 (QTSAH), 270–271 (YI), and Y319. C407 is an active-site residue. G489 provides a ligand contact to NAD(+).

It belongs to the urocanase family. Requires NAD(+) as cofactor.

It is found in the cytoplasm. The enzyme catalyses 4-imidazolone-5-propanoate = trans-urocanate + H2O. It functions in the pathway amino-acid degradation; L-histidine degradation into L-glutamate; N-formimidoyl-L-glutamate from L-histidine: step 2/3. Catalyzes the conversion of urocanate to 4-imidazolone-5-propionate. The chain is Urocanate hydratase from Bacillus mycoides (strain KBAB4) (Bacillus weihenstephanensis).